Consider the following 143-residue polypeptide: UPF0201 protein Pars_1985 (143 aa).

This sequence belongs to the UPF0201 family.

The protein is UPF0201 protein Pars_1985 of Pyrobaculum arsenaticum (strain DSM 13514 / JCM 11321 / PZ6).